A 330-amino-acid chain; its full sequence is Probable allantoicase (330 aa).

Belongs to the allantoicase family.

It catalyses the reaction allantoate + H2O = (S)-ureidoglycolate + urea. It functions in the pathway nitrogen metabolism; (S)-allantoin degradation; (S)-ureidoglycolate from allantoate (aminidohydrolase route): step 1/1. This Photobacterium profundum (strain SS9) protein is Probable allantoicase.